The chain runs to 126 residues: Small ribosomal subunit protein uS13 (126 aa).

The interval 98-126 (VRGQSTKNNARTRKGKRKTVANKKKAAKK) is disordered. The segment covering 107-126 (ARTRKGKRKTVANKKKAAKK) has biased composition (basic residues).

It belongs to the universal ribosomal protein uS13 family. As to quaternary structure, part of the 30S ribosomal subunit. Forms a loose heterodimer with protein S19. Forms two bridges to the 50S subunit in the 70S ribosome.

Located at the top of the head of the 30S subunit, it contacts several helices of the 16S rRNA. In the 70S ribosome it contacts the 23S rRNA (bridge B1a) and protein L5 of the 50S subunit (bridge B1b), connecting the 2 subunits; these bridges are implicated in subunit movement. Contacts the tRNAs in the A and P-sites. The protein is Small ribosomal subunit protein uS13 of Amoebophilus asiaticus (strain 5a2).